A 325-amino-acid polypeptide reads, in one-letter code: tRNA(Ile)-lysidine synthase (325 aa).

35–40 (SGGQDS) lines the ATP pocket.

The protein belongs to the tRNA(Ile)-lysidine synthase family.

Its subcellular location is the cytoplasm. It carries out the reaction cytidine(34) in tRNA(Ile2) + L-lysine + ATP = lysidine(34) in tRNA(Ile2) + AMP + diphosphate + H(+). In terms of biological role, ligates lysine onto the cytidine present at position 34 of the AUA codon-specific tRNA(Ile) that contains the anticodon CAU, in an ATP-dependent manner. Cytidine is converted to lysidine, thus changing the amino acid specificity of the tRNA from methionine to isoleucine. In Gloeobacter violaceus (strain ATCC 29082 / PCC 7421), this protein is tRNA(Ile)-lysidine synthase.